A 282-amino-acid chain; its full sequence is Bis(5'-nucleosyl)-tetraphosphatase, symmetrical (282 aa).

This sequence belongs to the Ap4A hydrolase family.

The catalysed reaction is P(1),P(4)-bis(5'-adenosyl) tetraphosphate + H2O = 2 ADP + 2 H(+). In terms of biological role, hydrolyzes diadenosine 5',5'''-P1,P4-tetraphosphate to yield ADP. This is Bis(5'-nucleosyl)-tetraphosphatase, symmetrical from Escherichia coli O7:K1 (strain IAI39 / ExPEC).